Reading from the N-terminus, the 653-residue chain is Transmembrane and coiled-coil domains protein 1 (653 aa).

Methionine 1 bears the N-acetylmethionine mark. 4 disordered regions span residues 1–35 (MEPSGSEQLFEDPDPGGKSQDAEARKQTESEQKLS), 58–78 (HQRRRSSVSPHDVQQIQADPE), 112–165 (PPKM…APTS), and 204–227 (TSSAVASSTDGSIHTDSVDGTPDP). Residues 1-591 (MEPSGSEQLF…ARNLLGKLIN (591 aa)) are Cytoplasmic-facing. A compositionally biased stretch (basic and acidic residues) spans 20–34 (QDAEARKQTESEQKL). Over residues 64 to 74 (SVSPHDVQQIQ) the composition is skewed to polar residues. Residues 113–125 (PKMKRGTSLHSRR) show a composition bias toward basic residues. The segment covering 135 to 144 (PQINRKSGQE) has biased composition (polar residues). A compositionally biased stretch (low complexity) spans 153 to 165 (RPRSSSTTDAPTS). Residues 204 to 218 (TSSAVASSTDGSIHT) show a composition bias toward polar residues. Residues 228 to 313 (QRTKAAIAHL…RKLREVEQNG (86 aa)) are a coiled coil. Phosphoserine is present on residues serine 382 and serine 414. The segment at 415-437 (PKYGSEEDCSSATSGSVGANSTT) is disordered. A compositionally biased stretch (polar residues) spans 424–437 (SSATSGSVGANSTT). A coiled-coil region spans residues 458-576 (GFDALLHEIQ…QQQQVVQLEG (119 aa)). 2 helical membrane-spanning segments follow: residues 592 to 612 (ILLAVMAVLLVFVSTVANCVV) and 625 to 645 (LFLVVFIAFLWKHWDALFSYV). Over 646–653 (ERFFSSPR) the chain is Cytoplasmic.

It belongs to the TEX28 family. May form homodimers and heterodimers with TMCC2 or TMCC3 via the coiled-coil domains. Interacts with ribosomal proteins RPL4 and RPS6.

It is found in the endoplasmic reticulum membrane. Its function is as follows. Endoplasmic reticulum membrane protein that promotes endoplasmic reticulum-associated endosome fission. Localizes to contact sites between the endoplasmic reticulum and endosomes and acts by promoting recruitment of the endoplasmic reticulum to endosome tubules for fission. Endosome membrane fission of early and late endosomes is essential to separate regions destined for lysosomal degradation from carriers to be recycled to the plasma membrane. This chain is Transmembrane and coiled-coil domains protein 1, found in Homo sapiens (Human).